The chain runs to 461 residues: Cysteine--tRNA ligase (461 aa).

Cys-28 lines the Zn(2+) pocket. Residues 30–40 carry the 'HIGH' region motif; it reads ITVYDLCHIGH. Positions 209, 234, and 238 each coordinate Zn(2+). Residues 266-270 carry the 'KMSKS' region motif; it reads KMSKS. Residue Lys-269 participates in ATP binding.

It belongs to the class-I aminoacyl-tRNA synthetase family. As to quaternary structure, monomer. The cofactor is Zn(2+).

Its subcellular location is the cytoplasm. It catalyses the reaction tRNA(Cys) + L-cysteine + ATP = L-cysteinyl-tRNA(Cys) + AMP + diphosphate. The chain is Cysteine--tRNA ligase from Escherichia coli (strain 55989 / EAEC).